We begin with the raw amino-acid sequence, 730 residues long: Stonin-1 (730 aa).

Disordered regions lie at residues 1–26 (MYSTNPGSWVTFDDDPAFQSSQKRKD), 38–83 (NGLK…PLST), and 132–159 (SPHVSLPSSHSHTQPTPTLGFTEDAGPQ). 2 stretches are compositionally biased toward low complexity: residues 54–65 (PSSASSTPLSSP) and 132–143 (SPHVSLPSSHSH). In terms of domain architecture, SHD spans 269–402 (GWSFMLRIPE…KLPATAKPKN (134 aa)). Residues 407–710 (EQEICLDIQD…ACYNIQVEIE (304 aa)) form the MHD domain.

It belongs to the Stoned B family.

It is found in the cytoplasm. It localises to the membrane. In terms of biological role, may be involved in the endocytic machinery. In Mus musculus (Mouse), this protein is Stonin-1 (Ston1).